Reading from the N-terminus, the 87-residue chain is Small ribosomal subunit protein uS15c (87 aa).

This sequence belongs to the universal ribosomal protein uS15 family. In terms of assembly, part of the 30S ribosomal subunit.

The protein resides in the plastid. The protein localises to the chloroplast. In Solanum lycopersicum (Tomato), this protein is Small ribosomal subunit protein uS15c (rps15).